A 576-amino-acid polypeptide reads, in one-letter code: uncharacterized protein (576 aa).

2 stretches are compositionally biased toward polar residues: residues Met-1 to Ser-21 and His-28 to Leu-40. Residues Met-1–Leu-40 form a disordered region. The next 12 helical transmembrane spans lie at Phe-149–Leu-169, Leu-173–Leu-193, Lys-200–Ala-220, Phe-231–Met-251, Ile-261–Phe-281, Trp-291–Cys-311, Pro-366–Leu-386, Met-401–Ile-421, Leu-446–Ser-466, Val-472–Phe-492, Tyr-503–Phe-525, and Gly-542–Phe-562.

The protein belongs to the major facilitator superfamily. CAR1 family.

The protein localises to the endoplasmic reticulum. It is found in the golgi apparatus. The protein resides in the membrane. This is an uncharacterized protein from Schizosaccharomyces pombe (strain 972 / ATCC 24843) (Fission yeast).